Consider the following 78-residue polypeptide: D-alanyl carrier protein (78 aa).

The Carrier domain maps to 1–78 (MEFREQVLDL…KIVEALEELK (78 aa)). Position 36 is an O-(pantetheine 4'-phosphoryl)serine (serine 36).

It belongs to the DltC family. Post-translationally, 4'-phosphopantetheine is transferred from CoA to a specific serine of apo-DCP.

The protein resides in the cytoplasm. Its pathway is cell wall biogenesis; lipoteichoic acid biosynthesis. In terms of biological role, carrier protein involved in the D-alanylation of lipoteichoic acid (LTA). The loading of thioester-linked D-alanine onto DltC is catalyzed by D-alanine--D-alanyl carrier protein ligase DltA. The DltC-carried D-alanyl group is further transferred to cell membrane phosphatidylglycerol (PG) by forming an ester bond, probably catalyzed by DltD. D-alanylation of LTA plays an important role in modulating the properties of the cell wall in Gram-positive bacteria, influencing the net charge of the cell wall. This is D-alanyl carrier protein from Staphylococcus carnosus (strain TM300).